The primary structure comprises 467 residues: Asparagine--tRNA ligase (467 aa).

Belongs to the class-II aminoacyl-tRNA synthetase family. In terms of assembly, homodimer.

It is found in the cytoplasm. The enzyme catalyses tRNA(Asn) + L-asparagine + ATP = L-asparaginyl-tRNA(Asn) + AMP + diphosphate + H(+). The chain is Asparagine--tRNA ligase from Haemophilus ducreyi (strain 35000HP / ATCC 700724).